The following is a 179-amino-acid chain: ATP synthase subunit delta (179 aa).

Belongs to the ATPase delta chain family. As to quaternary structure, F-type ATPases have 2 components, F(1) - the catalytic core - and F(0) - the membrane proton channel. F(1) has five subunits: alpha(3), beta(3), gamma(1), delta(1), epsilon(1). F(0) has three main subunits: a(1), b(2) and c(10-14). The alpha and beta chains form an alternating ring which encloses part of the gamma chain. F(1) is attached to F(0) by a central stalk formed by the gamma and epsilon chains, while a peripheral stalk is formed by the delta and b chains.

The protein localises to the cell inner membrane. F(1)F(0) ATP synthase produces ATP from ADP in the presence of a proton or sodium gradient. F-type ATPases consist of two structural domains, F(1) containing the extramembraneous catalytic core and F(0) containing the membrane proton channel, linked together by a central stalk and a peripheral stalk. During catalysis, ATP synthesis in the catalytic domain of F(1) is coupled via a rotary mechanism of the central stalk subunits to proton translocation. Its function is as follows. This protein is part of the stalk that links CF(0) to CF(1). It either transmits conformational changes from CF(0) to CF(1) or is implicated in proton conduction. The protein is ATP synthase subunit delta of Acidithiobacillus ferridurans.